A 148-amino-acid chain; its full sequence is Lysozyme-like protein 6 (148 aa).

Residues 1–19 form the signal peptide; the sequence is MTKALLIYLVSSFLALNQA. One can recognise a C-type lysozyme domain in the interval 20–148; the sequence is SLISRCDLAQ…FYWLTGCRLR (129 aa). Cystine bridges form between Cys-25-Cys-145, Cys-49-Cys-133, Cys-83-Cys-98, and Cys-94-Cys-112. Active-site residues include Glu-54 and Asp-71.

It belongs to the glycosyl hydrolase 22 family. In terms of assembly, monomer. As to expression, expressed in testis, epididymis and spermatozoa (at protein level). Expressed in late-stage spermatocytes and round spermatids.

It is found in the secreted. The protein localises to the cell surface. The protein resides in the cell projection. It localises to the cilium. Its subcellular location is the flagellum. The catalysed reaction is Hydrolysis of (1-&gt;4)-beta-linkages between N-acetylmuramic acid and N-acetyl-D-glucosamine residues in a peptidoglycan and between N-acetyl-D-glucosamine residues in chitodextrins.. Its function is as follows. May be involved sperm-egg plasma membrane adhesion and fusion during fertilization. Exhibits bacteriolytic activity in vitro against Micrococcus luteus and Staphylococcus aureus. Shows weak bacteriolytic activity against Gram-positive bacteria at physiological pH. Bacteriolytic activity is pH-dependent, with a maximum at around pH 5.6. In Homo sapiens (Human), this protein is Lysozyme-like protein 6 (LYZL6).